The sequence spans 95 residues: Co-chaperonin GroES (95 aa).

This sequence belongs to the GroES chaperonin family. Heptamer of 7 subunits arranged in a ring. Interacts with the chaperonin GroEL.

Its subcellular location is the cytoplasm. Its function is as follows. Together with the chaperonin GroEL, plays an essential role in assisting protein folding. The GroEL-GroES system forms a nano-cage that allows encapsulation of the non-native substrate proteins and provides a physical environment optimized to promote and accelerate protein folding. GroES binds to the apical surface of the GroEL ring, thereby capping the opening of the GroEL channel. The protein is Co-chaperonin GroES of Rickettsia canadensis (strain McKiel).